Consider the following 324-residue polypeptide: tRNA dimethylallyltransferase (324 aa).

17 to 24 (GPTASGKT) provides a ligand contact to ATP. 19 to 24 (TASGKT) is a binding site for substrate. Interaction with substrate tRNA stretches follow at residues 42 to 45 (DSAL), 166 to 170 (QRIQR), 251 to 256 (RCVGYR), and 284 to 291 (KRQITWLR).

Belongs to the IPP transferase family. Monomer. The cofactor is Mg(2+).

The enzyme catalyses adenosine(37) in tRNA + dimethylallyl diphosphate = N(6)-dimethylallyladenosine(37) in tRNA + diphosphate. Catalyzes the transfer of a dimethylallyl group onto the adenine at position 37 in tRNAs that read codons beginning with uridine, leading to the formation of N6-(dimethylallyl)adenosine (i(6)A). This chain is tRNA dimethylallyltransferase, found in Burkholderia orbicola (strain AU 1054).